We begin with the raw amino-acid sequence, 838 residues long: V-type proton ATPase 116 kDa subunit a 1 (838 aa).

Over M1–E388 the chain is Cytoplasmic. 2 positions are modified to phosphothreonine: T250 and T360. At Y364 the chain carries Phosphotyrosine. Residues I389–F407 form a helical membrane-spanning segment. Over G408–D409 the chain is Vacuolar. Residues F410–R426 form a helical membrane-spanning segment. At E427–S441 the chain is on the cytoplasmic side. The chain crosses the membrane as a helical span at residues M442–S471. Topologically, residues L472–S535 are vacuolar. The chain crosses the membrane as a helical span at residues F536–L555. At S556–F573 the chain is on the cytoplasmic side. The chain crosses the membrane as a helical span at residues I574–K594. The Vacuolar segment spans residues W595–F639. Residues L640 to L659 traverse the membrane as a helical segment. Residues R660–T725 lie on the Cytoplasmic side of the membrane. A helical membrane pass occupies residues I726 to A750. At Q751–A771 the chain is on the vacuolar side. A helical transmembrane segment spans residues G772 to E810. Residues F811–E838 are Cytoplasmic-facing.

It belongs to the V-ATPase 116 kDa subunit family. As to quaternary structure, V-ATPase is a heteromultimeric enzyme made up of two complexes: the ATP-hydrolytic V1 complex and the proton translocation V0 complex. The V1 complex consists of three catalytic AB heterodimers that form a heterohexamer, three peripheral stalks each consisting of EG heterodimers, one central rotor including subunits D and F, and the regulatory subunits C and H. The proton translocation complex V0 consists of the proton transport subunit a, a ring of proteolipid subunits c9c'', rotary subunit d, subunits e and f, and the accessory subunits ATP6AP1/Ac45 and ATP6AP2/PRR. Interacts with SPAAR. Expressed in brain (at protein level). As to expression, expressed in heart, kidney, liver, spleen, and to a lesser extent in brain.

The protein resides in the cytoplasmic vesicle. The protein localises to the clathrin-coated vesicle membrane. Its subcellular location is the secretory vesicle. It is found in the synaptic vesicle membrane. It localises to the melanosome. In terms of biological role, subunit of the V0 complex of vacuolar(H+)-ATPase (V-ATPase), a multisubunit enzyme composed of a peripheral complex (V1) that hydrolyzes ATP and a membrane integral complex (V0) that translocates protons. V-ATPase is responsible for the acidification of various organelles, such as lysosomes, endosomes, the trans-Golgi network, and secretory granules, including synaptic vesicles. In certain cell types, can be exported to the plasma membrane, where it is involved in the acidification of the extracellular environment. Required for assembly and activity of the vacuolar ATPase. Through its action on compartment acidification, plays an essential role in neuronal development in terms of integrity and connectivity of neurons. The chain is V-type proton ATPase 116 kDa subunit a 1 (Atp6v0a1) from Rattus norvegicus (Rat).